A 93-amino-acid polypeptide reads, in one-letter code: Large ribosomal subunit protein uL23 (93 aa).

This sequence belongs to the universal ribosomal protein uL23 family. Part of the 50S ribosomal subunit. Contacts protein L29, and trigger factor when it is bound to the ribosome.

Its function is as follows. One of the early assembly proteins it binds 23S rRNA. One of the proteins that surrounds the polypeptide exit tunnel on the outside of the ribosome. Forms the main docking site for trigger factor binding to the ribosome. The sequence is that of Large ribosomal subunit protein uL23 from Wolinella succinogenes (strain ATCC 29543 / DSM 1740 / CCUG 13145 / JCM 31913 / LMG 7466 / NCTC 11488 / FDC 602W) (Vibrio succinogenes).